A 151-amino-acid chain; its full sequence is C-C motif chemokine 25 (151 aa).

The first 23 residues, 1–23, serve as a signal peptide directing secretion; the sequence is MRPWLLACLVACFVGAWAPAIHA. Disulfide bonds link Cys-30–Cys-58 and Cys-31–Cys-75. The segment at 93–151 is disordered; sequence RNKKDSKPHHSGRRFFQGPQSGVRKLSSGTSRPLLLKFSGPTRSSKRKASLLTTAIPGP.

The protein belongs to the intercrine beta (chemokine CC) family.

It localises to the secreted. Functionally, potentially involved in T-cell development. Recombinant protein shows chemotactic activity on thymocytes, macrophages, THP-1 cells, and dendritics cells but is inactive on peripheral blood lymphocytes and neutrophils. Binds to CCR9. Binds to atypical chemokine receptor ACKR4 and mediates the recruitment of beta-arrestin (ARRB1/2) to ACKR4. The protein is C-C motif chemokine 25 (CCL25) of Sus scrofa (Pig).